We begin with the raw amino-acid sequence, 948 residues long: MDKTYQPHAIETSWYQTWESENYFAPQGVGDSYTIMIPPPNVTGSLHMGHGFNNAIMDALIRFRRMQGRNTLWQPGTDHAGIATQMLVERRLEAQGISRHELGREKFLDKIWEWKAESGGNISRQIRRLGSSVDWSRERFTMDDGLSDAVKEAFVRLHEDGLIYRGKRLVNWDTKLHTAISDLEVENHDEKGHLWNLRYPLADGAKTAEGLDYLIVATTRPETMLGDAAVAVNPQDERYKALIGKFVELPLVGRRIPIIADDYCDPEFGTGCVKITPAHDFNDYEVGKRHNLPLLNIFDKNANVLAAAQVFNLDGTLNESVDGSLPAAYAGLDRFEARKQIVAAFDAAGLLVSVDDHALKVPKGDRSGTIIEPWLTDQWYVSTKPLAEPAIAAVEDGRIAFVPKQYENMYFSWMRDIQDWCISRQLWWGHRIPAWYDESGKVYVGRDEAEVRAKNNLGPEIALQQDNDVLDTWFSSGLWTFSTLGWPEKTKALETFHSTDVLVTGFDIIFFWVARMIMLTMHLVKNEDGTPQVPFKTVYVHGLVRDGQGQKMSKSKGNVLDPLDIVDGIDLETLVEKRTSGLMQPQLAKKIEKQTRQEFADGIASYGTDALRFTFCSLASTGRDIKFDMGRVEGYRNFCNKIWNAARYVLDKGEDCGQNGEAVELSLADRWIISQLQRTEAEVTRQLDQFRFDLAAQALYEFIWNQYCDWYLELSKPVLWDETAPVERQRGTRRTLVRVLEVALRLAHPFMPFITEEIWQRLAPLAGAQGKTIMLQPWPVANEARIDQAAEDDIEWLKGLMLAVRNIRGEMNIGPGKPLQLFLKNVSAEDQRRLSENDYLLKKLAKLESMTVLTEGAEAPLSATALVGDMEVLVPMAGLIDKGAELARLDKEIQRLQGEVQRVGGKLSNAAFVDKAPPEVIAKERAKLTEAEQALGKLAEQHARIASL.

The 'HIGH' region signature appears at 40–50 (PNVTGSLHMGH). A 'KMSKS' region motif is present at residues 551 to 555 (KMSKS). Residue Lys-554 coordinates ATP. Residues 879–945 (LIDKGAELAR…GKLAEQHARI (67 aa)) adopt a coiled-coil conformation.

The protein belongs to the class-I aminoacyl-tRNA synthetase family. ValS type 1 subfamily. Monomer.

Its subcellular location is the cytoplasm. The enzyme catalyses tRNA(Val) + L-valine + ATP = L-valyl-tRNA(Val) + AMP + diphosphate. Functionally, catalyzes the attachment of valine to tRNA(Val). As ValRS can inadvertently accommodate and process structurally similar amino acids such as threonine, to avoid such errors, it has a 'posttransfer' editing activity that hydrolyzes mischarged Thr-tRNA(Val) in a tRNA-dependent manner. This Pseudomonas savastanoi pv. phaseolicola (strain 1448A / Race 6) (Pseudomonas syringae pv. phaseolicola (strain 1448A / Race 6)) protein is Valine--tRNA ligase.